Consider the following 800-residue polypeptide: Nuclear cap-binding protein subunit 1 (800 aa).

A disordered region spans residues 1-26 (MSRRRAHDTEDEGYDHRRNKRRRVSE). T9 is subject to Phosphothreonine. An MIF4G domain is found at 31–243 (EDRLESLILR…CLWAQIRKLR (213 aa)). The segment at 669-700 (LAKADSSSSDSEDDSSHKRKKPITHADKPSEE) is disordered.

The protein belongs to the NCBP1 family. Component of the nuclear cap-binding complex (CBC), a heterodimer composed of Cbp80 and Cbp20 that interacts with m7GpppG-capped RNA.

It is found in the nucleus. Functionally, component of the cap-binding complex (CBC), which binds cotranscriptionally to the 5'-cap of pre-mRNAs and is involved in various processes such as pre-mRNA splicing and RNA-mediated gene silencing (RNAi). The CBC complex is involved in miRNA-mediated RNA interference via its interaction with Ars2 and is required for primary microRNAs (miRNAs) processing. Also involved in innate immunity via the short interfering RNAs (siRNAs) processing machinery by restricting the viral RNA production. In the CBC complex, Cbp80 does not bind directly capped RNAs (m7GpppG-capped RNA) but is required to stabilize the movement of the N-terminal loop of Cbp20 and lock the CBC into a high affinity cap-binding state with the cap structure. The protein is Nuclear cap-binding protein subunit 1 (Cbp80) of Drosophila melanogaster (Fruit fly).